The sequence spans 189 residues: Ribosome maturation factor RimP (189 aa).

Belongs to the RimP family.

The protein localises to the cytoplasm. In terms of biological role, required for maturation of 30S ribosomal subunits. The chain is Ribosome maturation factor RimP from Corynebacterium kroppenstedtii (strain DSM 44385 / JCM 11950 / CIP 105744 / CCUG 35717).